Here is a 248-residue protein sequence, read N- to C-terminus: 4-hydroxy-tetrahydrodipicolinate reductase (248 aa).

Residues 74–76 and 99–102 each bind NAD(+); these read GTT and SANF. H134 (proton donor/acceptor) is an active-site residue. Position 135 (H135) interacts with (S)-2,3,4,5-tetrahydrodipicolinate. K138 serves as the catalytic Proton donor. 144–145 lines the (S)-2,3,4,5-tetrahydrodipicolinate pocket; it reads GT.

It belongs to the DapB family.

Its subcellular location is the cytoplasm. The enzyme catalyses (S)-2,3,4,5-tetrahydrodipicolinate + NAD(+) + H2O = (2S,4S)-4-hydroxy-2,3,4,5-tetrahydrodipicolinate + NADH + H(+). It carries out the reaction (S)-2,3,4,5-tetrahydrodipicolinate + NADP(+) + H2O = (2S,4S)-4-hydroxy-2,3,4,5-tetrahydrodipicolinate + NADPH + H(+). It participates in amino-acid biosynthesis; L-lysine biosynthesis via DAP pathway; (S)-tetrahydrodipicolinate from L-aspartate: step 4/4. In terms of biological role, catalyzes the conversion of 4-hydroxy-tetrahydrodipicolinate (HTPA) to tetrahydrodipicolinate. The polypeptide is 4-hydroxy-tetrahydrodipicolinate reductase (Chlorobium phaeobacteroides (strain DSM 266 / SMG 266 / 2430)).